The sequence spans 316 residues: Protein lifeguard 2 (316 aa).

The tract at residues 1-46 (MTQGKLSVANKAPGTEGQQQANGEKKETPAVPSAPPSYEEATSGEG) is disordered. Transmembrane regions (helical) follow at residues 106-126 (VYTI…LFTF), 138-158 (PGWY…LACC), and 165-185 (FPWN…LTGM). Asparagine 191 is a glycosylation site (N-linked (GlcNAc...) asparagine). Transmembrane regions (helical) follow at residues 194-214 (SVLL…VFSF), 225-245 (GVLF…AILL), 251-271 (PWLH…FLAF), and 290-310 (IFGA…FLQL).

The protein belongs to the BI1 family. LFG subfamily. As to quaternary structure, interacts with FAS/TNFRSF6 and BAX.

The protein localises to the cell membrane. It localises to the membrane raft. The protein resides in the postsynaptic cell membrane. Its function is as follows. Antiapoptotic protein which protects cells uniquely from Fas-induced apoptosis. Regulates Fas-mediated apoptosis in neurons by interfering with caspase-8 activation. Plays a role in cerebellar development by affecting cerebellar size, internal granular layer (IGL) thickness, and Purkinje cell (PC) development. The chain is Protein lifeguard 2 (FAIM2) from Bos taurus (Bovine).